Consider the following 335-residue polypeptide: UPF0353 protein MLBr01808 (335 aa).

Helical transmembrane passes span 18–38 (WFFL…MMQV) and 67–87 (VPAI…AGPT). The 197-residue stretch at 98–294 (VVMLVIDVSQ…AELKAVYASL (197 aa)) folds into the VWFA domain. Residues 309–329 (AGWLRLGVLVLALAALTALLI) traverse the membrane as a helical segment.

Belongs to the UPF0353 family.

It localises to the cell membrane. This chain is UPF0353 protein MLBr01808, found in Mycobacterium leprae (strain Br4923).